A 290-amino-acid polypeptide reads, in one-letter code: Lipoyl synthase (290 aa).

[4Fe-4S] cluster-binding residues include cysteine 32, cysteine 37, cysteine 43, cysteine 58, cysteine 62, cysteine 65, and serine 272. Residues 44–261 (WGEGTATFMI…KEVAVSLGFK (218 aa)) form the Radical SAM core domain.

The protein belongs to the radical SAM superfamily. Lipoyl synthase family. [4Fe-4S] cluster is required as a cofactor.

Its subcellular location is the cytoplasm. The enzyme catalyses [[Fe-S] cluster scaffold protein carrying a second [4Fe-4S](2+) cluster] + N(6)-octanoyl-L-lysyl-[protein] + 2 oxidized [2Fe-2S]-[ferredoxin] + 2 S-adenosyl-L-methionine + 4 H(+) = [[Fe-S] cluster scaffold protein] + N(6)-[(R)-dihydrolipoyl]-L-lysyl-[protein] + 4 Fe(3+) + 2 hydrogen sulfide + 2 5'-deoxyadenosine + 2 L-methionine + 2 reduced [2Fe-2S]-[ferredoxin]. The protein operates within protein modification; protein lipoylation via endogenous pathway; protein N(6)-(lipoyl)lysine from octanoyl-[acyl-carrier-protein]: step 2/2. Its function is as follows. Catalyzes the radical-mediated insertion of two sulfur atoms into the C-6 and C-8 positions of the octanoyl moiety bound to the lipoyl domains of lipoate-dependent enzymes, thereby converting the octanoylated domains into lipoylated derivatives. The sequence is that of Lipoyl synthase from Pyrobaculum aerophilum (strain ATCC 51768 / DSM 7523 / JCM 9630 / CIP 104966 / NBRC 100827 / IM2).